The primary structure comprises 87 residues: UPF0512 protein B (87 aa).

It belongs to the UPF0512 family.

This Dictyostelium discoideum (Social amoeba) protein is UPF0512 protein B.